Reading from the N-terminus, the 484-residue chain is MNWEIVIGLETHTQLSTDSKIFSGSSTRFGAAPNTQANAVDLALPGSLPVMNRGAAERAILFGLAVGGKVAPRSVFARKNYFYPDLPKGYQISQYELPVVEGGTLSFFVGEEEKTVNLTRAHLEEDAGKSLHDEFSLASGAPASGIDLNRAGTPLLEIVTEPEMRSAAEAVAYARALHSLVVWLGICDGNMQEGSFRCDANVSVRPVGQKEFGTRTEIKNVNSFRFLERAILFEARRQIELIEDGGTVVQETRLYDADRDETRSMRSKEDAHDYRYFPDPDLPPLVIGQDWIDAVRAGMPELPAAQRARFEADYGLPAYDAAQLTVSRAMADYFEAVARALPAGQAKLAANWIMGEVAATLNREEKDIDAAPVSAAALAALINRIIDGTISNKIARDVFAAMWAGENGGDADAIIEARGLKQISDSGAIGAMIDEVLAANPAIVEEYRAGKQKAFNSLVGQIMKAAKGKANPQQVNELLKEKLG.

This sequence belongs to the GatB/GatE family. GatB subfamily. In terms of assembly, heterotrimer of A, B and C subunits.

It catalyses the reaction L-glutamyl-tRNA(Gln) + L-glutamine + ATP + H2O = L-glutaminyl-tRNA(Gln) + L-glutamate + ADP + phosphate + H(+). The catalysed reaction is L-aspartyl-tRNA(Asn) + L-glutamine + ATP + H2O = L-asparaginyl-tRNA(Asn) + L-glutamate + ADP + phosphate + 2 H(+). Allows the formation of correctly charged Asn-tRNA(Asn) or Gln-tRNA(Gln) through the transamidation of misacylated Asp-tRNA(Asn) or Glu-tRNA(Gln) in organisms which lack either or both of asparaginyl-tRNA or glutaminyl-tRNA synthetases. The reaction takes place in the presence of glutamine and ATP through an activated phospho-Asp-tRNA(Asn) or phospho-Glu-tRNA(Gln). The protein is Aspartyl/glutamyl-tRNA(Asn/Gln) amidotransferase subunit B of Bordetella pertussis (strain Tohama I / ATCC BAA-589 / NCTC 13251).